A 284-amino-acid polypeptide reads, in one-letter code: D-tagatose-1,6-bisphosphate aldolase subunit GatY (284 aa).

Asp-82 acts as the Proton donor in catalysis. Zn(2+)-binding residues include His-83 and His-180. Gly-181 is a binding site for dihydroxyacetone phosphate. His-208 serves as a coordination point for Zn(2+). Residues 209–211 (GAS) and 230–233 (NVAT) contribute to the dihydroxyacetone phosphate site.

The protein belongs to the class II fructose-bisphosphate aldolase family. TagBP aldolase GatY subfamily. As to quaternary structure, forms a complex with GatZ. Zn(2+) is required as a cofactor.

The enzyme catalyses D-tagatofuranose 1,6-bisphosphate = D-glyceraldehyde 3-phosphate + dihydroxyacetone phosphate. It functions in the pathway carbohydrate metabolism; D-tagatose 6-phosphate degradation; D-glyceraldehyde 3-phosphate and glycerone phosphate from D-tagatose 6-phosphate: step 2/2. Its function is as follows. Catalytic subunit of the tagatose-1,6-bisphosphate aldolase GatYZ, which catalyzes the reversible aldol condensation of dihydroxyacetone phosphate (DHAP or glycerone-phosphate) with glyceraldehyde 3-phosphate (G3P) to produce tagatose 1,6-bisphosphate (TBP). Requires GatZ subunit for full activity and stability. Is involved in the catabolism of galactitol. In Escherichia coli O157:H7, this protein is D-tagatose-1,6-bisphosphate aldolase subunit GatY.